The sequence spans 282 residues: Shikimate dehydrogenase (NADP(+)) (282 aa).

Residues 18–20 and threonine 65 each bind shikimate; that span reads SRS. The active-site Proton acceptor is lysine 69. Shikimate-binding residues include asparagine 90 and aspartate 106. Residues 134–138, 158–163, and isoleucine 223 each bind NADP(+); these read GAGGA and NRTAAR. Residue tyrosine 225 coordinates shikimate. Glycine 246 serves as a coordination point for NADP(+).

It belongs to the shikimate dehydrogenase family. Homodimer.

It carries out the reaction shikimate + NADP(+) = 3-dehydroshikimate + NADPH + H(+). It functions in the pathway metabolic intermediate biosynthesis; chorismate biosynthesis; chorismate from D-erythrose 4-phosphate and phosphoenolpyruvate: step 4/7. In terms of biological role, involved in the biosynthesis of the chorismate, which leads to the biosynthesis of aromatic amino acids. Catalyzes the reversible NADPH linked reduction of 3-dehydroshikimate (DHSA) to yield shikimate (SA). The chain is Shikimate dehydrogenase (NADP(+)) from Methylobacterium radiotolerans (strain ATCC 27329 / DSM 1819 / JCM 2831 / NBRC 15690 / NCIMB 10815 / 0-1).